The chain runs to 100 residues: Nucleoid-associated protein Cagg_3200 (100 aa).

The protein belongs to the YbaB/EbfC family. In terms of assembly, homodimer.

It localises to the cytoplasm. The protein localises to the nucleoid. Its function is as follows. Binds to DNA and alters its conformation. May be involved in regulation of gene expression, nucleoid organization and DNA protection. This Chloroflexus aggregans (strain MD-66 / DSM 9485) protein is Nucleoid-associated protein Cagg_3200.